An 802-amino-acid chain; its full sequence is Lon protease (802 aa).

One can recognise a Lon N-terminal domain in the interval 21 to 215 (LPLLPVRDII…KIIQILNAEI (195 aa)). 367-374 (GPPGVGKT) contacts ATP. Positions 603-784 (ENDVGVATGL…DEVISLTIER (182 aa)) constitute a Lon proteolytic domain. Residues serine 690 and lysine 733 contribute to the active site.

Belongs to the peptidase S16 family. Homohexamer. Organized in a ring with a central cavity.

It is found in the cytoplasm. It carries out the reaction Hydrolysis of proteins in presence of ATP.. ATP-dependent serine protease that mediates the selective degradation of mutant and abnormal proteins as well as certain short-lived regulatory proteins. Required for cellular homeostasis and for survival from DNA damage and developmental changes induced by stress. Degrades polypeptides processively to yield small peptide fragments that are 5 to 10 amino acids long. Binds to DNA in a double-stranded, site-specific manner. The chain is Lon protease from Endomicrobium trichonymphae.